A 356-amino-acid polypeptide reads, in one-letter code: UDP-N-acetylglucosamine--N-acetylmuramyl-(pentapeptide) pyrophosphoryl-undecaprenol N-acetylglucosamine transferase (356 aa).

UDP-N-acetyl-alpha-D-glucosamine-binding positions include 15 to 17, Asn127, Arg163, Ser191, Ile244, 263 to 268, and Gln288; these read TGG and ALTVSE.

This sequence belongs to the glycosyltransferase 28 family. MurG subfamily.

It is found in the cell inner membrane. It catalyses the reaction di-trans,octa-cis-undecaprenyl diphospho-N-acetyl-alpha-D-muramoyl-L-alanyl-D-glutamyl-meso-2,6-diaminopimeloyl-D-alanyl-D-alanine + UDP-N-acetyl-alpha-D-glucosamine = di-trans,octa-cis-undecaprenyl diphospho-[N-acetyl-alpha-D-glucosaminyl-(1-&gt;4)]-N-acetyl-alpha-D-muramoyl-L-alanyl-D-glutamyl-meso-2,6-diaminopimeloyl-D-alanyl-D-alanine + UDP + H(+). It functions in the pathway cell wall biogenesis; peptidoglycan biosynthesis. Functionally, cell wall formation. Catalyzes the transfer of a GlcNAc subunit on undecaprenyl-pyrophosphoryl-MurNAc-pentapeptide (lipid intermediate I) to form undecaprenyl-pyrophosphoryl-MurNAc-(pentapeptide)GlcNAc (lipid intermediate II). The chain is UDP-N-acetylglucosamine--N-acetylmuramyl-(pentapeptide) pyrophosphoryl-undecaprenol N-acetylglucosamine transferase from Klebsiella pneumoniae (strain 342).